The sequence spans 751 residues: Adhesive plaque matrix protein (751 aa).

Positions 1–20 (MEGIKLNLCLLCIFTCDILG) are cleaved as a signal peptide. Residues 21 to 41 (FSNGNIYNAHGSAYAGASAGA) form a nonrepetitive linker region. Tandem repeats lie at residues 109–118 (YKPKMTYPPT), 119–128 (YKPKPSYPPT), 129–138 (YKPKPSYPAT), 139–148 (YKSKSSYPSS), 149–158 (YKPKKTYPPT), 159–168 (YKPKLTYPPT), 169–178 (YKPKPSYPPT), 179–188 (YKPKPSYPAT), 189–198 (YKSKSSYPPS), 199–208 (YKTKKTYPSS), 209–218 (YKPKKTYPST), 219–228 (YKPKVSYPPT), 229–238 (YKSKKSYPPI), 239–248 (YKTKASYPSS), 249–258 (YKPKKTYPST), 259–268 (YKPKISYPPT), 269–278 (YKAKPSYPTS), 279–288 (YRAKPSYPST), 289–298 (YKAKPSYPPT), 299–308 (YKAKPSYPPT), 309–318 (YKAKPTYPST), 319–328 (YKAKPSYPPT), 329–338 (YKAKPSYPPT), 339–348 (YKAKPSYPPS), 349–358 (YKPKTTYPPS), 359–368 (YKPKISYPPT), 369–378 (YKAKPSYPPI), 379–388 (YKAKPSYPPT), 389–398 (YKAKPSYLPT), 399–408 (YKAKPSYPPT), 409–418 (YKAKPRYPTT), 419–428 (YKAKPSYPPT), 429–438 (YKAKPSYPPT), 439–448 (YKAKLSYPPT), 449–458 (YKAKPSYPPT), 459–468 (YKAKPSYPPT), 469–478 (YKAKPSYPPT), 479–488 (YKTKPSYPRT), 489–498 (YKAKPSYSST), 499–508 (YKAKPSYPPT), 509–518 (YKAKPSYPPT), 519–528 (YKAKPSYPPT), 529–538 (YKAKPSYPPT), 539–548 (YKAKPSYPPT), 549–558 (YKAKPSYPQT), 559–568 (YKAKSSYPPT), 569–578 (YKAKPSYPPT), 579–588 (YKAKPSYPPT), 589–598 (YKAKPSYPPT), 599–608 (YKAKPSYPPT), 609–618 (YKAKPSYPPT), 619–628 (YKAKPSYPPT), 629–638 (YKAKPSYPPT), 639–648 (YKAKPSYPPT), and 649–658 (YKAKPSYPAT). Positions 109–732 (YKPKMTYPPT…YKPKPSYPPT (624 aa)) are 63 X 10 AA tandem repeats of Y-[KR]-[APTS]-K-[KPMSLTIVA]-[STR]-Y-[PLS]-[PASRQT]-[STI]. Residues 158 to 167 (TYKPKLTYPP) show a composition bias toward low complexity. Positions 158 to 359 (TYKPKLTYPP…KPKTTYPPSY (202 aa)) are disordered. Residues 168–184 (TYKPKPSYPPTYKPKPS) are compositionally biased toward pro residues. Positions 185–262 (YPATYKSKSS…KTYPSTYKPK (78 aa)) are enriched in low complexity. Low complexity-rich tracts occupy residues 288 to 343 (TYKA…KAKP) and 350 to 359 (KPKTTYPPSY). The interval 397–636 (PTYKAKPSYP…PTYKAKPSYP (240 aa)) is disordered. The span at 444 to 486 (SYPPTYKAKPSYPPTYKAKPSYPPTYKAKPSYPPTYKTKPSYP) shows a compositional bias: low complexity. The 56; truncated repeat unit spans residues 659–662 (YPST). The interval 660–751 (PSTYKAKPSY…KKKISYPSQY (92 aa)) is disordered. The segment covering 662–677 (TYKAKPSYPPTYKAKP) has biased composition (low complexity). Tandem repeats lie at residues 663 to 672 (YKAKPSYPPT), 673 to 682 (YKAKPSYPPT), 683 to 692 (YKPKPSYPPT), 693 to 702 (YKSKSSYPSS), 703 to 712 (YKPKKTYPPT), 713 to 722 (YKPKLTYPPI), and 723 to 732 (YKPKPSYPPT). A compositionally biased stretch (pro residues) spans 678–690 (SYPPTYKPKPSYP). The segment covering 691-721 (PTYKSKSSYPSSYKPKKTYPPTYKPKLTYPP) has biased composition (low complexity).

Hydroxylated on proline (mono- or dihydroxylation) and tyrosine residues (to L-DOPA = 3',4'-dihydroxyphenylalanine) of the tandem repeats. Produced by the byssal gland.

The protein resides in the secreted. Provides adhesiveness to the mussel's foot. Mussels produce one of the strongest water insoluble glues. The mussel's adhesive is a bundle of threads, called a byssus, formed by a fibrous collagenous core coated with adhesive proteins. The sequence is that of Adhesive plaque matrix protein (FP1) from Mytilus galloprovincialis (Mediterranean mussel).